A 437-amino-acid polypeptide reads, in one-letter code: O-methyltransferase elcB (437 aa).

An S-adenosyl-L-methionine-binding site is contributed by Asp269. The active-site Proton acceptor is His319.

Belongs to the class I-like SAM-binding methyltransferase superfamily. Cation-independent O-methyltransferase family. COMT subfamily.

The protein operates within secondary metabolite biosynthesis. O-methyltransferase; part of the gene cluster that mediates the biosynthesis of elsinochrome C, a perelyenequinone phytotoxin structurally similar to cercosporin. The first step of elsinochrome C biosynthesis is performed by the polyketide synthase elcA which catalyzes the formation of nor-toralactone. The starter unit acyltransferase (SAT) domain of elcA initiates polyketide extension by the selective utilization of acetyl-CoA, which is elongated to the heptaketide in the beta-ketoacyl synthase (KS) domain by successive condensations with six malonyl units introduced by the malonyl acyltransferase (MAT) domain. The product template (PT) domain catalyzes C4-C9 and C2-C11 aldol cyclizations and dehydrations to a trihydroxynaphthalene, which is thought to be delivered to the thioesterase (TE) domain for product release. The bifunctional enzyme elcB then methylates nor-toralactone to toralactone before conducting an unusual oxidative aromatic ring opening. The next step in perylenequinone biosynthesis is an O-methylation at the nascent OH-6 of the elcB product performed by the O-methyltransferase elcD. The oxidative coupling of the two monomeric naphthol units in perylenequinone biosynthesis is catalyzed by the FAD-dependent monooxygenase elcE and the multicopper oxidase elcG. ElcG might catalyze the first intermolecular coupling in a regio- and stereo-selective manner via a phenol radical coupling mechanism and the elcE could forge the second C-C bond intramolecularly via a hydride transfer mechanism. The fasciclin domain-containing protein elcF might also play a role duting this step. The last piece of the puzzle in the biosynthesis of elsinochrome C is the additional annulation by enolate coupling to afford the dihydrobenzo(ghi)perylenequinone system, catalyzed by the FAD-dependent monooxygenase elcH. This chain is O-methyltransferase elcB, found in Phaeosphaeria nodorum (strain SN15 / ATCC MYA-4574 / FGSC 10173) (Glume blotch fungus).